The chain runs to 205 residues: N-(5'-phosphoribosyl)anthranilate isomerase (205 aa).

The protein belongs to the TrpF family.

It catalyses the reaction N-(5-phospho-beta-D-ribosyl)anthranilate = 1-(2-carboxyphenylamino)-1-deoxy-D-ribulose 5-phosphate. Its pathway is amino-acid biosynthesis; L-tryptophan biosynthesis; L-tryptophan from chorismate: step 3/5. The chain is N-(5'-phosphoribosyl)anthranilate isomerase from Marinomonas sp. (strain MWYL1).